The primary structure comprises 751 residues: Catalase-peroxidase 1 (751 aa).

The span at 1 to 11 (MTDKQHTRSVS) shows a compositional bias: basic and acidic residues. A disordered region spans residues 1–31 (MTDKQHTRSVSESENPAIPSPTPKVSRPRRN). Residues 103 to 225 (WHAAGTYRIA…LANVQMGLIY (123 aa)) constitute a cross-link (tryptophyl-tyrosyl-methioninium (Trp-Tyr) (with M-251)). Residue H104 is the Proton acceptor of the active site. A cross-link (tryptophyl-tyrosyl-methioninium (Tyr-Met) (with W-103)) is located at residues 225-251 (YVNPEGPGGNPDPLAAARDIRETFARM). H266 provides a ligand contact to heme b. The interval 345–375 (AGAKQWKPKNPEANDTVPDAHGASRRHSPTM) is disordered.

It belongs to the peroxidase family. Peroxidase/catalase subfamily. In terms of assembly, homodimer or homotetramer. Heme b is required as a cofactor. Post-translationally, formation of the three residue Trp-Tyr-Met cross-link is important for the catalase, but not the peroxidase activity of the enzyme.

It catalyses the reaction H2O2 + AH2 = A + 2 H2O. It carries out the reaction 2 H2O2 = O2 + 2 H2O. Functionally, bifunctional enzyme with both catalase and broad-spectrum peroxidase activity. The protein is Catalase-peroxidase 1 of Cupriavidus pinatubonensis (strain JMP 134 / LMG 1197) (Cupriavidus necator (strain JMP 134)).